The primary structure comprises 188 residues: dCTP deaminase (188 aa).

Residues 111-116 (KSTYAR), 135-137 (TLE), glutamine 156, tyrosine 170, and glutamine 180 contribute to the dCTP site. Glutamate 137 functions as the Proton donor/acceptor in the catalytic mechanism.

Belongs to the dCTP deaminase family. Homotrimer.

It catalyses the reaction dCTP + H2O + H(+) = dUTP + NH4(+). It functions in the pathway pyrimidine metabolism; dUMP biosynthesis; dUMP from dCTP (dUTP route): step 1/2. In terms of biological role, catalyzes the deamination of dCTP to dUTP. This chain is dCTP deaminase, found in Cupriavidus necator (strain ATCC 17699 / DSM 428 / KCTC 22496 / NCIMB 10442 / H16 / Stanier 337) (Ralstonia eutropha).